The sequence spans 452 residues: tRNA-2-methylthio-N(6)-dimethylallyladenosine synthase (452 aa).

An MTTase N-terminal domain is found at 3 to 118; it reads KKVFIKTYGC…LPQLLAERER (116 aa). [4Fe-4S] cluster contacts are provided by Cys12, Cys49, Cys81, Cys155, Cys159, and Cys162. Residues 141 to 379 enclose the Radical SAM core domain; that stretch reads RVEGASAFVS…QTVINDSIKR (239 aa). Residues 382–445 form the TRAM domain; the sequence is ESRLGTVQRI…SFTLRGEVVT (64 aa).

It belongs to the methylthiotransferase family. MiaB subfamily. Monomer. It depends on [4Fe-4S] cluster as a cofactor.

The protein resides in the cytoplasm. The enzyme catalyses N(6)-dimethylallyladenosine(37) in tRNA + (sulfur carrier)-SH + AH2 + 2 S-adenosyl-L-methionine = 2-methylsulfanyl-N(6)-dimethylallyladenosine(37) in tRNA + (sulfur carrier)-H + 5'-deoxyadenosine + L-methionine + A + S-adenosyl-L-homocysteine + 2 H(+). Its function is as follows. Catalyzes the methylthiolation of N6-(dimethylallyl)adenosine (i(6)A), leading to the formation of 2-methylthio-N6-(dimethylallyl)adenosine (ms(2)i(6)A) at position 37 in tRNAs that read codons beginning with uridine. The sequence is that of tRNA-2-methylthio-N(6)-dimethylallyladenosine synthase from Albidiferax ferrireducens (strain ATCC BAA-621 / DSM 15236 / T118) (Rhodoferax ferrireducens).